We begin with the raw amino-acid sequence, 213 residues long: ATP phosphoribosyltransferase (213 aa).

Belongs to the ATP phosphoribosyltransferase family. Short subfamily. Heteromultimer composed of HisG and HisZ subunits.

The protein resides in the cytoplasm. The enzyme catalyses 1-(5-phospho-beta-D-ribosyl)-ATP + diphosphate = 5-phospho-alpha-D-ribose 1-diphosphate + ATP. The protein operates within amino-acid biosynthesis; L-histidine biosynthesis; L-histidine from 5-phospho-alpha-D-ribose 1-diphosphate: step 1/9. Its function is as follows. Catalyzes the condensation of ATP and 5-phosphoribose 1-diphosphate to form N'-(5'-phosphoribosyl)-ATP (PR-ATP). Has a crucial role in the pathway because the rate of histidine biosynthesis seems to be controlled primarily by regulation of HisG enzymatic activity. The sequence is that of ATP phosphoribosyltransferase from Nitrosococcus oceani (strain ATCC 19707 / BCRC 17464 / JCM 30415 / NCIMB 11848 / C-107).